Consider the following 435-residue polypeptide: Xylose isomerase (435 aa).

Aspartate 306 and aspartate 308 together coordinate Mg(2+).

Belongs to the xylose isomerase family. In terms of assembly, homotetramer. Mg(2+) serves as cofactor.

It is found in the cytoplasm. The enzyme catalyses alpha-D-xylose = alpha-D-xylulofuranose. This Allorhizobium ampelinum (strain ATCC BAA-846 / DSM 112012 / S4) (Agrobacterium vitis (strain S4)) protein is Xylose isomerase.